Here is a 356-residue protein sequence, read N- to C-terminus: Geranylgeranyl pyrophosphate synthase penG (356 aa).

Isopentenyl diphosphate-binding residues include lysine 83, arginine 86, and histidine 115. Aspartate 122 and aspartate 126 together coordinate Mg(2+). Dimethylallyl diphosphate is bound at residue arginine 131. Arginine 132 is an isopentenyl diphosphate binding site. Lysine 209, threonine 210, and glutamine 243 together coordinate dimethylallyl diphosphate. Aspartate 246 is a Mg(2+) binding site. Residues asparagine 250, lysine 260, and lysine 270 each coordinate dimethylallyl diphosphate.

Belongs to the FPP/GGPP synthase family. The cofactor is Mg(2+).

It carries out the reaction isopentenyl diphosphate + dimethylallyl diphosphate = (2E)-geranyl diphosphate + diphosphate. The enzyme catalyses isopentenyl diphosphate + (2E)-geranyl diphosphate = (2E,6E)-farnesyl diphosphate + diphosphate. It catalyses the reaction isopentenyl diphosphate + (2E,6E)-farnesyl diphosphate = (2E,6E,10E)-geranylgeranyl diphosphate + diphosphate. The protein operates within secondary metabolite biosynthesis. Its function is as follows. Geranylgeranyl pyrophosphate synthase; part of the gene cluster that mediates the biosynthesis of the indole diterpenes penitrems. The geranylgeranyl diphosphate (GGPP) synthase ptmG catalyzes the first step in penitrem biosynthesis via conversion of farnesyl pyrophosphate and isopentyl pyrophosphate into geranylgeranyl pyrophosphate (GGPP). Condensation of indole-3-glycerol phosphate with GGPP by the prenyl transferase ptmC then forms 3-geranylgeranylindole (3-GGI). Epoxidation by the FAD-dependent monooxygenase ptmM leads to a epoxidized-GGI that is substrate of the terpene cyclase ptmB for cyclization to yield paspaline. Paspaline is subsequently converted to 13-desoxypaxilline by the cytochrome P450 monooxygenase ptmP, the latter being then converted to paxilline by the cytochrome P450 monooxygenase ptmQ. Paxilline is converted to beta-paxitriol via C-10 ketoreduction by the short-chain dehydrogenase ptmH which can be monoprenylated at the C-20 by the indole diterpene prenyltransferase ptmD. A two-step elimination (acetylation and elimination) process performed by the O-acetyltransferase ptmV and ptmI leads to the production of the prenylated form of penijanthine. The FAD-linked oxidoreductase ptmO then converts the prenylated form of penijanthine into PC-M5 which is in turn transformed into PC-M4 by the aromatic dimethylallyltransferase ptmE. Five sequential oxidative transformations performed by the cytochrome P450 monooxygenases ptmK, ptmU, ptmL, ptmN and ptmJ yield the various penitrem compounds. PtmK, ptmU and ptmM are involved in the formation of the key bicyclic ring of penitrem C via the formation of the intermediates secopenitrem D and penitrem D. PtmL catalyzes the epoxidation of penitrem D and C to yield penitrem B and F, respectively. PtmJ catalyzes the last benzylic hydroxylation to convert penitrem B to prenitrem E and penitrem F to penitrem A. In Penicillium ochrochloron, this protein is Geranylgeranyl pyrophosphate synthase penG.